The following is a 536-amino-acid chain: Caspase recruitment domain-containing protein 9 (536 aa).

Ser-2 is modified (phosphoserine). The Zn(2+) site is built by Asp-3, Cys-10, and His-73. Residues 6 to 98 form the CARD domain; it reads NDDECWSVLE…QLYKKVTGKE (93 aa). Positions 99 to 116 are linker; sequence PARVFSMIIDASGESGLT. 2 coiled-coil regions span residues 117–277 and 332–419; these read QLLM…DRSS and LRKD…QQLE. A Glycyl lysine isopeptide (Lys-Gly) (interchain with G-Cter in ubiquitin) cross-link involves residue Lys-125. A Phosphothreonine modification is found at Thr-231. Ser-277 is modified (phosphoserine). A phosphoserine mark is found at Ser-424, Ser-425, Ser-431, Ser-450, Ser-460, Ser-483, and Ser-498. Positions 427-536 are disordered; that stretch reads LEDGSPRRSQ…GSDNTDTEGS (110 aa). Basic and acidic residues predominate over residues 487-502; sequence PPEKERRRLKESFENY. Residues 503–513 are compositionally biased toward basic residues; it reads RRKRALRKMQK. 2 positions are modified to phosphothreonine; by CK2: Thr-531 and Thr-533.

As to quaternary structure, monomer. Homodimer; homodimerization is mediated by the CARD domain which forms an extensive interaction with the adjacent linker and coiled-coil regions; leads to an autoinhibited state. Homomultimer; polymerizes following activation, forming a nucleating helical template that seeds BCL10-filament formation via a CARD-CARD interaction. Interacts (via CARD domain) with BCL10 (via CARD domain); interaction takes place following CARD9 activation and polymerization, leading to the formation of a filamentous CBM complex assembly. Component of a CBM complex (CARD9-BCL10, MALT1), composed of CARD9, BCL10 and MALT1. Interacts with RASGRF1. Interacts with NOD2 (via NACHT domain); interaction is direct. Interacts with RIPK2. Interacts with VHL; without leading to protein degradation. Post-translationally, phosphorylated at Thr-231 by PRKCD downstream of C-type lectin receptors activation: phosphorylation promotes interaction with BCL10, followed by activation of NF-kappa-B and MAP kinase p38 pathways. Phosphorylated at Thr-531 and Thr-533 by CK2 following interaction with VHL, leading to inhibit the ability to activate NF-kappa-B. Ubiquitinated at Lys-125 via 'Lys-27'-linked ubiquitin by TRIM62 downstream of C-type lectin receptors activation; leading to CARD9 activation, followed by activation of NF-kappa-B and MAP kinase p38 pathways. Deubiquitinated at Lys-125 by USP15, inhibiting CARD9. As to expression, expression is restricted to several populations of phagocytes, such as macrophages, monocytes, and dendritic cells. Highly expressed in spleen. Also detected in liver, placenta, lung, peripheral blood leukocytes and in brain.

Its subcellular location is the cytoplasm. With respect to regulation, maintained in an autoinhibited state via homodimerization in which the CARD domain forms an extensive interaction with the adjacent linker and coiled-coil regions. Activation downstream of C-type lectin receptors, by phosphorylation by PRKCD and/or ubiquitination by TRIM62, triggers disruption of the CARD domain-coiled coil interface, CARD9 homooligomerization and BCL10 recruitment, followed by activation of NF-kappa-B and MAP kinase p38 pathways. Zinc-binding inhibits activation by stabilizing the CARD ground-state conformation and restricting its capacity to form BCL10-nucleating filaments. Its function is as follows. Adapter protein that plays a key role in innate immune response against fungi by forming signaling complexes downstream of C-type lectin receptors. CARD9-mediated signals are essential for antifungal immunity against a subset of fungi from the phylum Ascomycota. Transduces signals in myeloid cells downstream of C-type lectin receptors CLEC7A (dectin-1), CLEC6A (dectin-2) and CLEC4E (Mincle), which detect pathogen-associated molecular pattern metabolites (PAMPs), such as fungal carbohydrates, and trigger CARD9 activation. Upon activation, CARD9 homooligomerizes to form a nucleating helical template that recruits BCL10 via CARD-CARD interaction, thereby promoting polymerization of BCL10 and subsequent recruitment of MALT1: this leads to activation of NF-kappa-B and MAP kinase p38 (MAPK11, MAPK12, MAPK13 and/or MAPK14) pathways which stimulate expression of genes encoding pro-inflammatory cytokines and chemokines. CARD9 signaling in antigen-presenting cells links innate sensing of fungi to the activation of adaptive immunity and provides a cytokine milieu that induces the development and subsequent of interleukin 17-producing T helper (Th17) cells. Also involved in activation of myeloid cells via classical ITAM-associated receptors and TLR: required for TLR-mediated activation of MAPK, while it is not required for TLR-induced activation of NF-kappa-B. CARD9 can also be engaged independently of BCL10: forms a complex with RASGRF1 downstream of C-type lectin receptors, which recruits and activates HRAS, leading to ERK activation and the production of cytokines. Acts as an important regulator of the intestinal commensal fungi (mycobiota) component of the gut microbiota. Plays an essential role in antifungal immunity against dissemination of gut fungi: acts by promoting induction of antifungal IgG antibodies response in CX3CR1(+) macrophages to confer protection against disseminated C.albicans or C.auris infection. Also mediates immunity against other pathogens, such as certain bacteria, viruses and parasites; CARD9 signaling is however redundant with other innate immune responses. In response to L.monocytogenes infection, required for the production of inflammatory cytokines activated by intracellular peptidoglycan: acts by connecting NOD2 recognition of peptidoglycan to downstream activation of MAP kinases (MAPK) without activating NF-kappa-B. The polypeptide is Caspase recruitment domain-containing protein 9 (Homo sapiens (Human)).